The chain runs to 321 residues: Methionyl-tRNA formyltransferase (321 aa).

113 to 116 (SILP) provides a ligand contact to (6S)-5,6,7,8-tetrahydrofolate.

Belongs to the Fmt family.

It carries out the reaction L-methionyl-tRNA(fMet) + (6R)-10-formyltetrahydrofolate = N-formyl-L-methionyl-tRNA(fMet) + (6S)-5,6,7,8-tetrahydrofolate + H(+). Functionally, attaches a formyl group to the free amino group of methionyl-tRNA(fMet). The formyl group appears to play a dual role in the initiator identity of N-formylmethionyl-tRNA by promoting its recognition by IF2 and preventing the misappropriation of this tRNA by the elongation apparatus. The protein is Methionyl-tRNA formyltransferase of Vibrio atlanticus (strain LGP32) (Vibrio splendidus (strain Mel32)).